The chain runs to 477 residues: Glycogen synthase (477 aa).

An ADP-alpha-D-glucose-binding site is contributed by Lys-15.

This sequence belongs to the glycosyltransferase 1 family. Bacterial/plant glycogen synthase subfamily.

It catalyses the reaction [(1-&gt;4)-alpha-D-glucosyl](n) + ADP-alpha-D-glucose = [(1-&gt;4)-alpha-D-glucosyl](n+1) + ADP + H(+). It functions in the pathway glycan biosynthesis; glycogen biosynthesis. Synthesizes alpha-1,4-glucan chains using ADP-glucose. This Salmonella choleraesuis (strain SC-B67) protein is Glycogen synthase.